The primary structure comprises 498 residues: Cyclin-L1 (498 aa).

Cyclin-like stretches follow at residues 68–169 (ERIQ…RILK) and 182–266 (KIIV…NTMK). The interval 294 to 498 (LKARGQNPNG…SGHSHSRHRR (205 aa)) is disordered. Polar residues predominate over residues 311–320 (NGFSPASKPS). Basic and acidic residues predominate over residues 321–341 (SPRDVKMDDKSPNSKLKEPEN). Residues 366–396 (KNHSRSRSRSTSRSPHRHRRSHSGTYSSHSS) are RS. The segment covering 367–387 (NHSRSRSRSTSRSPHRHRRSH) has biased composition (basic residues). The span at 388–402 (SGTYSSHSSHSPSPR) shows a compositional bias: low complexity. Phosphoserine is present on residues Ser409 and Ser412. A compositionally biased stretch (basic and acidic residues) spans 415-426 (RTDRDRPSETSR). Basic residues predominate over residues 427–440 (HSNKRRRSRSRSRS). Over residues 441-478 (NSRERVRDRDHIKHKQERSGSGHHWDHRDRERDRSRDH) the composition is skewed to basic and acidic residues. The span at 479–498 (GRNKRQSRSHSGHSHSRHRR) shows a compositional bias: basic residues.

Belongs to the cyclin family. Cyclin L subfamily.

The protein localises to the nucleus speckle. It localises to the nucleus. The protein resides in the nucleoplasm. In terms of biological role, involved in pre-mRNA splicing. This is Cyclin-L1 (ccnl1) from Danio rerio (Zebrafish).